The primary structure comprises 501 residues: Cytochrome P450 2J1 (501 aa).

Cys-447 lines the heme pocket.

This sequence belongs to the cytochrome P450 family. It depends on heme as a cofactor. Small intestine.

It is found in the endoplasmic reticulum membrane. It localises to the microsome membrane. It catalyses the reaction an organic molecule + reduced [NADPH--hemoprotein reductase] + O2 = an alcohol + oxidized [NADPH--hemoprotein reductase] + H2O + H(+). Its function is as follows. Catalyzes the N-demethylation of benzphetamine to formaldehyde. This is Cytochrome P450 2J1 (CYP2J1) from Oryctolagus cuniculus (Rabbit).